Consider the following 340-residue polypeptide: GTPase Obg (340 aa).

The region spanning 1–159 (MGFIDEVKLC…KHVLLKLKVL (159 aa)) is the Obg domain. An OBG-type G domain is found at 160–329 (SDVGIIGMPN…LSEKLKKSNS (170 aa)). GTP is bound by residues 166-173 (GMPNAGKS), 191-195 (FTTVR), 212-215 (DIPG), 279-282 (NKCD), and 310-312 (NGD). S173 and T193 together coordinate Mg(2+).

This sequence belongs to the TRAFAC class OBG-HflX-like GTPase superfamily. OBG GTPase family. As to quaternary structure, monomer. Requires Mg(2+) as cofactor.

The protein resides in the cytoplasm. Functionally, an essential GTPase which binds GTP, GDP and possibly (p)ppGpp with moderate affinity, with high nucleotide exchange rates and a fairly low GTP hydrolysis rate. Plays a role in control of the cell cycle, stress response, ribosome biogenesis and in those bacteria that undergo differentiation, in morphogenesis control. This Wolbachia pipientis wMel protein is GTPase Obg.